Reading from the N-terminus, the 303-residue chain is Bifunctional protein FolD (303 aa).

Residues 165–167 (GRS), Ser-190, and Ile-231 each bind NADP(+).

This sequence belongs to the tetrahydrofolate dehydrogenase/cyclohydrolase family. Homodimer.

It catalyses the reaction (6R)-5,10-methylene-5,6,7,8-tetrahydrofolate + NADP(+) = (6R)-5,10-methenyltetrahydrofolate + NADPH. The catalysed reaction is (6R)-5,10-methenyltetrahydrofolate + H2O = (6R)-10-formyltetrahydrofolate + H(+). It functions in the pathway one-carbon metabolism; tetrahydrofolate interconversion. In terms of biological role, catalyzes the oxidation of 5,10-methylenetetrahydrofolate to 5,10-methenyltetrahydrofolate and then the hydrolysis of 5,10-methenyltetrahydrofolate to 10-formyltetrahydrofolate. This Prochlorococcus marinus (strain NATL2A) protein is Bifunctional protein FolD.